The primary structure comprises 432 residues: Keratin, type I cytoskeletal 18-B (432 aa).

Residues 1–21 (MSYSRSMYSSSSVVGGSPYRS) show a composition bias toward low complexity. Positions 1–44 (MSYSRSMYSSSSVVGGSPYRSLSSAPRFAPGSSAASVHAGPGGS) are disordered. Residues 2–82 (SYSRSMYSSS…NVSLMGGAQN (81 aa)) are head. A coil 1A region spans residues 83-118 (EKETMQDLNDRLASYLERVRSLETANKELEVQIRQH). Residues 83-393 (EKETMQDLND…RLLEGDSFDL (311 aa)) form the IF rod domain. Residues 119–134 (TEKKGPAKDWSPYYKA) form a linker 1 region. Residues 135–226 (IEDLKKQVFD…KNHQDDVNEL (92 aa)) form a coil 1B region. The tract at residues 227–250 (QAQIARSAVTVEVDAPKSQDLGKI) is linker 12. The coil 2 stretch occupies residues 251–388 (MAELRAQYDG…IHTYRRLLEG (138 aa)). Residues 389-432 (DSFDLQDAVPTVTTQTVKKVITTTQRIVDGKVVAESNDTEVLKA) form a tail region.

It belongs to the intermediate filament family. In terms of assembly, heterotetramer of two type I and two type II keratins. Keratin-18 associates with keratin-8. Post-translationally, phosphorylated. Proteolytically cleaved by caspases during epithelial cell apoptosis.

Functionally, when phosphorylated, plays a role in filament reorganization. The sequence is that of Keratin, type I cytoskeletal 18-B (krt18-b) from Xenopus laevis (African clawed frog).